The sequence spans 72 residues: DNA-directed RNA polymerase subunit omega (72 aa).

This sequence belongs to the RNA polymerase subunit omega family. As to quaternary structure, the RNAP catalytic core consists of 2 alpha, 1 beta, 1 beta' and 1 omega subunit. When a sigma factor is associated with the core the holoenzyme is formed, which can initiate transcription.

It catalyses the reaction RNA(n) + a ribonucleoside 5'-triphosphate = RNA(n+1) + diphosphate. Its function is as follows. Promotes RNA polymerase assembly. Latches the N- and C-terminal regions of the beta' subunit thereby facilitating its interaction with the beta and alpha subunits. The protein is DNA-directed RNA polymerase subunit omega of Limosilactobacillus reuteri (strain DSM 20016) (Lactobacillus reuteri).